A 291-amino-acid polypeptide reads, in one-letter code: E3 ubiquitin-protein ligase MARCHF8 (291 aa).

Residues 22-72 are disordered; sequence YRSKTKEKEREEQNEKTLGHFMSHSSNISKAGSPPSASAPAPVSSFSRTSI. Residues 25–39 are compositionally biased toward basic and acidic residues; that stretch reads KTKEKEREEQNEKTL. Positions 50–72 are enriched in low complexity; sequence SKAGSPPSASAPAPVSSFSRTSI. The RING-CH-type zinc finger occupies 72 to 133; sequence ITPSSQDICR…ELCKYEFIME (62 aa). 8 residues coordinate Zn(2+): Cys-80, Cys-83, Cys-97, Cys-99, His-107, Cys-110, Cys-123, and Cys-126. The next 2 membrane-spanning stretches (helical) occupy residues 157-177 and 197-217; these read CSVT…YVLI and FWTK…FMYV. Phosphoserine is present on Ser-253.

Interacts with CD86. In terms of tissue distribution, broadly expressed. Present in immature dendritic cells (at protein level).

Its subcellular location is the golgi apparatus membrane. The protein resides in the endoplasmic reticulum membrane. The protein localises to the cytoplasmic vesicle membrane. It is found in the lysosome membrane. It localises to the early endosome membrane. It carries out the reaction S-ubiquitinyl-[E2 ubiquitin-conjugating enzyme]-L-cysteine + [acceptor protein]-L-lysine = [E2 ubiquitin-conjugating enzyme]-L-cysteine + N(6)-ubiquitinyl-[acceptor protein]-L-lysine.. The protein operates within protein modification; protein ubiquitination. Its function is as follows. E3 ubiquitin-protein ligase that plays several important roles in innate immunity and adaptive immunity. Mediates ubiquitination of CD86 and MHC class II proteins, such as HLA-DR alpha and beta, and promotes their subsequent endocytosis and sorting to lysosomes via multivesicular bodies. Possesses a very broad antiviral activity by specifically inactivating different viral fusion proteins. Targets and ubiquitinates cytoplasmic lysine residues of viral envelope glycoproteins with single transmembrane domains leading to their lysosomal degradation. Therefore, shows broad-spectrum inhibition against many viruses including retroviruses, rhabdoviruses, arenaviruses, sarbecoviruses or influenzaviruses. Strongly blocks human immunodeficiency virus type 1 envelope glycoprotein incorporation into virions by down-regulating its cell surface expression. Also blocks ebola virus glycoprotein/GP incorporation via surface down-regulation. Mediates 'Lys-63'-linked polyubiquitination of influenza M2 to target it to lysosome for degradation. Mediates the regulation of constitutive ubiquitination and trafficking of the viral restriction factor BST2 within the endocytic pathway. Plays a role in maintenance of immune tolerance to self by promoting the turnover and proteasomal degradation of PD-L1/CD274 via ubiquitination. Catalyzes the 'Lys-63'-linked polyubiquitylation of cGAS thereby inhibiting its DNA binding ability and impairing its antiviral innate immunity. Negatively regulates IL7-mediated T-cell homeostasis by mediating 'Lys-27'-linked polyubiquitination of IL7R, leading to its lysosomal degradation. Functionally, (Microbial infection) Mediates 'Lys-63'-linked polyubiquitination of hepatitis C virus/HCV protein NS2 which allows its binding to HGS, an ESCRT-0 complex component, and this interaction is essential for HCV envelopment. The polypeptide is E3 ubiquitin-protein ligase MARCHF8 (Homo sapiens (Human)).